Here is a 207-residue protein sequence, read N- to C-terminus: Protein LURP1 (207 aa).

The protein belongs to the LOR family. As to expression, limited to discrete pathogen infection sites in leaves.

Functionally, involved in basal defense against virulent oomycetes. Might be related to the phospholipid scramblase and tubby-like superfamily of membrane tethered transcription factors. The sequence is that of Protein LURP1 (LURP1) from Arabidopsis thaliana (Mouse-ear cress).